The following is a 207-amino-acid chain: Holliday junction branch migration complex subunit RuvA (207 aa).

The interval 1–64 is domain I; sequence MIGRLRGNLL…EDAQLLYGFN (64 aa). Residues 65 to 143 are domain II; sequence TKNERALFRE…GWGAGDLFTP (79 aa). The tract at residues 144-158 is flexible linker; sequence ATDAAPMDDGSEFIT. A domain III region spans residues 159-207; the sequence is SPQSAVDEAVSALIALGYKPQQASKTVSQIAKPDMTSEVLIRESLKSMI.

Belongs to the RuvA family. In terms of assembly, homotetramer. Forms an RuvA(8)-RuvB(12)-Holliday junction (HJ) complex. HJ DNA is sandwiched between 2 RuvA tetramers; dsDNA enters through RuvA and exits via RuvB. An RuvB hexamer assembles on each DNA strand where it exits the tetramer. Each RuvB hexamer is contacted by two RuvA subunits (via domain III) on 2 adjacent RuvB subunits; this complex drives branch migration. In the full resolvosome a probable DNA-RuvA(4)-RuvB(12)-RuvC(2) complex forms which resolves the HJ.

It localises to the cytoplasm. The RuvA-RuvB-RuvC complex processes Holliday junction (HJ) DNA during genetic recombination and DNA repair, while the RuvA-RuvB complex plays an important role in the rescue of blocked DNA replication forks via replication fork reversal (RFR). RuvA specifically binds to HJ cruciform DNA, conferring on it an open structure. The RuvB hexamer acts as an ATP-dependent pump, pulling dsDNA into and through the RuvAB complex. HJ branch migration allows RuvC to scan DNA until it finds its consensus sequence, where it cleaves and resolves the cruciform DNA. This chain is Holliday junction branch migration complex subunit RuvA, found in Aliivibrio fischeri (strain ATCC 700601 / ES114) (Vibrio fischeri).